The sequence spans 1392 residues: MEVLMAERANLVFHNKAIDGTAMKRLISRLIEHFGMAYTSHILDQVKTLGFQQATATSISLGIDDLLTIPSKGWLVQDAEQQSLILEKHHQYGNVHAVEKLRQSIEIWYATSEYLRQEMNPNFRMTDPFNPVHIMSFSGARGNASQVHQLVGMRGLMSDPQGQMIDLPIQSNLREGLSLTEYIISCYGARKGVVDTAVRTSDAGYLTRRLVEVVQHIVVRRTDCGTARGISVSPRNGIMPERIFSQTLIGRVLADDIYMGSRCIATRNQAIGIGLVNRFITFRAQPISIRTPFTCRSTSWICRLCYGRSPTHGDLVELGEAVGIIAGQSIGEPGTQLTLRTFHTGGVFTGGTAEHVRAPSNGKIKFNEDLVHPTRTRHGHPAFLCSIDLYVTIESEDILHNVNIPPKSLLLVQNDQYVESEQVIAEIRAGISTLNFKEKVRKHIYSDSDGEMHWSTDVYHAPEFTYGNVHLLPKTSHLWILLGGPCRSSLVYLSIHKDQDQMNAHSLSGKRRYTSNLSVTNDQARQKLFSSDFYGQKEDRIPDYSDLNRIICTGQYNLVYSPILHGNSALLSKRRRNKFIIPLHSIQELENELMPCSGISIEIPVNGIFRRNSILAYFDDPRYRRKSSGIIKYGTIETHSVIKKEDLIEYRGVKEFRPKYQMKVDRFFFIPEEVHILPGSSSLMVRNNSIVGVDTQITLNLRSRVGGLVRVERKKKRIELKIFSGDIHFPGETDKISRHTGVLIPPGTGKRNSKEYKKVQNWIYVQRITPSKKRFFVLVRPVVTYEITDGINLGTLFPPDPLQERDNVQLRIVNYILYGNGKPIRGISDTSIQLVRTCLVLNWNQDKKSSSCEEARASFVEIRTNGLIRHFLKINLVKSPISYIGKRNDPSGSGLLSDNGSDCTNINPFSAIYSYSKAKIQQSLNQPQGTIHTLLNRNKECQSLIILSAANCSRMEPFKDVKYHSVIKESIKKDPLIPIRNSLGPLGTCLPIENFYSSYHLITHNQILVTKYLQLDNLKQTFQVIKLKYYLMDENGKIFNPDPCRNIILNPFNLNWSFLHHYYCAETSKIISLGQFICENVCIAKNGPPLKSGQVILVQVDSIVIRSAKPYLATPGATVHGHYGETLYEGDTLVTFIYEKSRSGDITQGLPKVEQVLEVRSIDSISMNLEKRVEGWNKCIPRILGIPWGFLIGAELTIAQSRISLVNKIQQVYRSQGVQIHNRHIEIIVRQITSKVLISEDGMSNVFSPGELIGLLRAERMGRALEEAICYRVVLLGITRASLNTQSFISEASFQETARVLAKAALRGRIDWLKGLKENVVLGGVIPVGTGFKGLVHPSKQHNNIPLETKKTNLFEGEMRDILFHHRKLFDSCLSKKFHDIPEQSFIGFNDS.

Residues Cys224, Cys295, Cys302, and Cys305 each contribute to the Zn(2+) site.

Belongs to the RNA polymerase beta' chain family. RpoC2 subfamily. As to quaternary structure, in plastids the minimal PEP RNA polymerase catalytic core is composed of four subunits: alpha, beta, beta', and beta''. When a (nuclear-encoded) sigma factor is associated with the core the holoenzyme is formed, which can initiate transcription. Requires Zn(2+) as cofactor.

The protein resides in the plastid. It is found in the chloroplast. The enzyme catalyses RNA(n) + a ribonucleoside 5'-triphosphate = RNA(n+1) + diphosphate. In terms of biological role, DNA-dependent RNA polymerase catalyzes the transcription of DNA into RNA using the four ribonucleoside triphosphates as substrates. The chain is DNA-directed RNA polymerase subunit beta'' from Solanum lycopersicum (Tomato).